The sequence spans 1108 residues: Probable arabinosyltransferase A (1108 aa).

13 helical membrane-spanning segments follow: residues Ile12–Leu34, Ile204–Leu223, Val258–Gly280, Val334–Leu356, Ala368–Phe387, Ile397–Leu414, Ala421–Ala443, Gly463–Val482, Phe531–Val553, Trp582–Cys604, Thr616–Tyr638, Ile653–Trp675, and Val696–Thr718. Residues Pro804–Gly825 are disordered.

The protein belongs to the emb family.

Its subcellular location is the cell membrane. In terms of biological role, arabinosyl transferase responsible for the polymerization of arabinose into the arabinan of arabinogalactan. This chain is Probable arabinosyltransferase A (embA), found in Mycobacterium avium.